The chain runs to 1176 residues: Pesticidal crystal protein Cry1Cb (1176 aa).

Belongs to the delta endotoxin family.

Functionally, promotes colloidosmotic lysis by binding to the midgut epithelial cells of insects. Toxic to Spodoptera exigua and Trichoplusia ni. This chain is Pesticidal crystal protein Cry1Cb (cry1Cb), found in Bacillus thuringiensis subsp. galleriae.